The chain runs to 462 residues: Argininosuccinate lyase (462 aa).

Belongs to the lyase 1 family. Argininosuccinate lyase subfamily.

It localises to the cytoplasm. It catalyses the reaction 2-(N(omega)-L-arginino)succinate = fumarate + L-arginine. It functions in the pathway amino-acid biosynthesis; L-arginine biosynthesis; L-arginine from L-ornithine and carbamoyl phosphate: step 3/3. The protein is Argininosuccinate lyase of Caldicellulosiruptor bescii (strain ATCC BAA-1888 / DSM 6725 / KCTC 15123 / Z-1320) (Anaerocellum thermophilum).